Reading from the N-terminus, the 159-residue chain is Phosphopantetheine adenylyltransferase (159 aa).

A substrate-binding site is contributed by T10. Residues 10–11 (TF) and H18 contribute to the ATP site. K42, M74, and R88 together coordinate substrate. ATP contacts are provided by residues 89–91 (GLR), E99, and 124–130 (WSFISSS).

Belongs to the bacterial CoaD family. Homohexamer. Requires Mg(2+) as cofactor.

It is found in the cytoplasm. The catalysed reaction is (R)-4'-phosphopantetheine + ATP + H(+) = 3'-dephospho-CoA + diphosphate. It participates in cofactor biosynthesis; coenzyme A biosynthesis; CoA from (R)-pantothenate: step 4/5. Reversibly transfers an adenylyl group from ATP to 4'-phosphopantetheine, yielding dephospho-CoA (dPCoA) and pyrophosphate. The polypeptide is Phosphopantetheine adenylyltransferase (Yersinia pseudotuberculosis serotype O:3 (strain YPIII)).